The primary structure comprises 762 residues: Phosphoribosylformylglycinamidine synthase subunit PurL (762 aa).

H58 is an active-site residue. Residues Y61 and R105 each coordinate ATP. A Mg(2+)-binding site is contributed by E107. Residues 108 to 111 (SHNH) and R130 contribute to the substrate site. The active-site Proton acceptor is H109. D131 lines the Mg(2+) pocket. Substrate is bound at residue Q255. D283 provides a ligand contact to Mg(2+). 327–329 (ESQ) is a substrate binding site. 2 residues coordinate ATP: N513 and G550. N551 contacts Mg(2+). S553 is a substrate binding site.

This sequence belongs to the FGAMS family. Monomer. Part of the FGAM synthase complex composed of 1 PurL, 1 PurQ and 2 PurS subunits.

The protein localises to the cytoplasm. It carries out the reaction N(2)-formyl-N(1)-(5-phospho-beta-D-ribosyl)glycinamide + L-glutamine + ATP + H2O = 2-formamido-N(1)-(5-O-phospho-beta-D-ribosyl)acetamidine + L-glutamate + ADP + phosphate + H(+). Its pathway is purine metabolism; IMP biosynthesis via de novo pathway; 5-amino-1-(5-phospho-D-ribosyl)imidazole from N(2)-formyl-N(1)-(5-phospho-D-ribosyl)glycinamide: step 1/2. In terms of biological role, part of the phosphoribosylformylglycinamidine synthase complex involved in the purines biosynthetic pathway. Catalyzes the ATP-dependent conversion of formylglycinamide ribonucleotide (FGAR) and glutamine to yield formylglycinamidine ribonucleotide (FGAM) and glutamate. The FGAM synthase complex is composed of three subunits. PurQ produces an ammonia molecule by converting glutamine to glutamate. PurL transfers the ammonia molecule to FGAR to form FGAM in an ATP-dependent manner. PurS interacts with PurQ and PurL and is thought to assist in the transfer of the ammonia molecule from PurQ to PurL. In Corynebacterium glutamicum (strain R), this protein is Phosphoribosylformylglycinamidine synthase subunit PurL.